Reading from the N-terminus, the 371-residue chain is Glycosyltransferase 8 domain-containing protein 1 (371 aa).

Topologically, residues 1–7 (MSFRKVN) are cytoplasmic. The chain crosses the membrane as a helical; Signal-anchor for type II membrane protein span at residues 8 to 28 (IIILVLAVALFLLVLHHNFLS). The Lumenal portion of the chain corresponds to 29-371 (LSSLLRNEVT…RRYTEISNIK (343 aa)). N-linked (GlcNAc...) asparagine glycosylation is found at asparagine 249 and asparagine 257.

The protein belongs to the glycosyltransferase 8 family.

It localises to the membrane. The chain is Glycosyltransferase 8 domain-containing protein 1 (GLT8D1) from Homo sapiens (Human).